Reading from the N-terminus, the 377-residue chain is Protein RecA (377 aa).

ATP is bound at residue 76 to 83 (GPESSGKT). The tract at residues 346 to 377 (TNGNNGEDHEGTEPVEIEAEDAAPKKGKKGKH) is disordered.

The protein belongs to the RecA family.

The protein resides in the cytoplasm. In terms of biological role, can catalyze the hydrolysis of ATP in the presence of single-stranded DNA, the ATP-dependent uptake of single-stranded DNA by duplex DNA, and the ATP-dependent hybridization of homologous single-stranded DNAs. It interacts with LexA causing its activation and leading to its autocatalytic cleavage. The protein is Protein RecA of Bdellovibrio bacteriovorus (strain ATCC 15356 / DSM 50701 / NCIMB 9529 / HD100).